A 471-amino-acid polypeptide reads, in one-letter code: Heat shock 70 kDa protein 13 (471 aa).

The first 22 residues, 1–22, serve as a signal peptide directing secretion; the sequence is MAGEMTILGSAVLTLLLAGYLA. Asparagine 184 carries N-linked (GlcNAc...) asparagine glycosylation. The segment at 316 to 339 is disordered; it reads NDSQKPQNADSKLPEDQLTPGDGH.

This sequence belongs to the heat shock protein 70 family. Binds UBQLN2.

It localises to the microsome. The protein localises to the endoplasmic reticulum. Functionally, has peptide-independent ATPase activity. The chain is Heat shock 70 kDa protein 13 (Hspa13) from Rattus norvegicus (Rat).